We begin with the raw amino-acid sequence, 773 residues long: Immunoglobulin domain and leucine-rich repeat-containing protein 2 (773 aa).

The first 20 residues, M1–S20, serve as a signal peptide directing secretion. Over Q21–S493 the chain is Extracellular. LRR repeat units follow at residues T52–G73, S74–P96, F97–P120, L122–I144, F145–N167, and T168–V191. A glycan (N-linked (GlcNAc...) asparagine) is linked at N114. N204 carries an N-linked (GlcNAc...) asparagine glycan. 4 LRR repeats span residues S206–F230, L233–A251, P252–P275, and P296–M319. The 131-residue stretch at P349 to R479 folds into the Ig-like domain. Residues N361 and N379 are each glycosylated (N-linked (GlcNAc...) asparagine). C396 and C463 form a disulfide bridge. Residues V494 to I514 form a helical membrane-spanning segment. At T515–R773 the chain is on the cytoplasmic side. The segment at V725–R773 is disordered. Over residues N733 to T745 the composition is skewed to polar residues. Residues S746–H763 are compositionally biased toward low complexity. Residues R764–R773 are compositionally biased toward basic and acidic residues.

The protein localises to the membrane. This is Immunoglobulin domain and leucine-rich repeat-containing protein 2 from Caenorhabditis elegans.